The chain runs to 355 residues: Isopentenyl-diphosphate delta-isomerase (355 aa).

12-13 contacts substrate; that stretch reads RK. Residues serine 70, 71-73, serine 101, and asparagine 130 contribute to the FMN site; that span reads SMT. Residue 101–103 coordinates substrate; sequence SMR. Glutamine 165 contacts substrate. Glutamate 166 is a binding site for Mg(2+). FMN is bound by residues lysine 197 and 308–309; that span reads AG.

This sequence belongs to the IPP isomerase type 2 family. In terms of assembly, homooctamer. Dimer of tetramers. It depends on FMN as a cofactor. NADPH serves as cofactor. The cofactor is Mg(2+).

The protein localises to the cytoplasm. It catalyses the reaction isopentenyl diphosphate = dimethylallyl diphosphate. Involved in the biosynthesis of isoprenoids. Catalyzes the 1,3-allylic rearrangement of the homoallylic substrate isopentenyl (IPP) to its allylic isomer, dimethylallyl diphosphate (DMAPP). The chain is Isopentenyl-diphosphate delta-isomerase from Chlorobium phaeovibrioides (strain DSM 265 / 1930) (Prosthecochloris vibrioformis (strain DSM 265)).